We begin with the raw amino-acid sequence, 171 residues long: Shikimate kinase (171 aa).

Position 14–19 (14–19 (GAGKST)) interacts with ATP. Ser18 contacts Mg(2+). 3 residues coordinate substrate: Asp36, Arg60, and Gly82. ATP is bound at residue Arg120. Arg139 contacts substrate. An ATP-binding site is contributed by Gln156.

The protein belongs to the shikimate kinase family. In terms of assembly, monomer. The cofactor is Mg(2+).

The protein localises to the cytoplasm. The catalysed reaction is shikimate + ATP = 3-phosphoshikimate + ADP + H(+). Its pathway is metabolic intermediate biosynthesis; chorismate biosynthesis; chorismate from D-erythrose 4-phosphate and phosphoenolpyruvate: step 5/7. Its function is as follows. Catalyzes the specific phosphorylation of the 3-hydroxyl group of shikimic acid using ATP as a cosubstrate. This chain is Shikimate kinase, found in Shewanella denitrificans (strain OS217 / ATCC BAA-1090 / DSM 15013).